The following is a 212-amino-acid chain: RNA chaperone ProQ (212 aa).

Positions Q107 to V153 are disordered. Over residues Q117–K126 the composition is skewed to low complexity. Basic residues predominate over residues T127–K141.

This sequence belongs to the ProQ family.

The protein resides in the cytoplasm. In terms of biological role, RNA chaperone with significant RNA binding, RNA strand exchange and RNA duplexing activities. In Shewanella halifaxensis (strain HAW-EB4), this protein is RNA chaperone ProQ.